The primary structure comprises 530 residues: Carbohydrate sulfotransferase 2 (530 aa).

The interval 1–20 is disordered; it reads MSRSSPRALPPGALPRPLPA. Over 1 to 54 the chain is Cytoplasmic; it reads MSRSSPRALPPGALPRPLPAAPAAVQRALLPPWPRRAGRRWPASPLGMKVFRRK. A compositionally biased stretch (pro residues) spans 8–20; it reads ALPPGALPRPLPA. Residues 55–75 form a helical; Signal-anchor for type II membrane protein membrane-spanning segment; the sequence is ALVLCAGYALLLVLTMLNLLD. Over 76-530 the chain is Lumenal; the sequence is YKWHKEPLQQ…SKTLLRKPRL (455 aa). Residues 97 to 128 form a disordered region; the sequence is GAAGAGWGRPGSPPAAPPRAHSRMDPRTPYRP. 173-179 contacts 3'-phosphoadenylyl sulfate; that stretch reads WRSGSSF. N-linked (GlcNAc...) asparagine glycosylation occurs at N243. 332-340 lines the 3'-phosphoadenylyl sulfate pocket; it reads RDPRAVASS. 2 N-linked (GlcNAc...) asparagine glycosylation sites follow: N457 and N475.

It belongs to the sulfotransferase 1 family. Gal/GlcNAc/GalNAc subfamily. As to quaternary structure, homodimer; disulfide-linked. Homodimerization is not essential for enzyme activity. As to expression, in brain, it is expressed in pyramidal cells in the CA3 subregion of the hippocampus, cerebellar nucleus and Purkinje cells. Expressed in peripheral lymph nodes.

Its subcellular location is the golgi apparatus. The protein localises to the trans-Golgi network membrane. It catalyses the reaction 3-O-{N-acetyl-beta-D-glucosaminyl-(1-&gt;3)-beta-D-galactosyl-(1-&gt;3)-N-acetyl-alpha-D-galactosaminyl}-L-threonyl-[protein] + 3'-phosphoadenylyl sulfate = 3-O-{6-O-sulfo-N-acetyl-beta-D-glucosaminyl-(1-&gt;3)-beta-D-galactosyl-(1-&gt;3)-N-acetyl-alpha-D-galactosaminyl}-L-threonyl-[protein] + adenosine 3',5'-bisphosphate + H(+). It carries out the reaction 3-O-{N-acetyl-beta-D-glucosaminyl-(1-&gt;3)-beta-D-galactosyl-(1-&gt;3)-N-acetyl-alpha-D-galactosaminyl}-L-seryl-[protein] + 3'-phosphoadenylyl sulfate = 3-O-{6-O-sulfo-N-acetyl-beta-D-glucosaminyl-(1-&gt;3)-beta-D-galactosyl-(1-&gt;3)-N-acetyl-alpha-D-galactosaminyl}-L-seryl-[protein] + adenosine 3',5'-bisphosphate + H(+). The enzyme catalyses a 3-O-{beta-D-galactosyl-(1-&gt;3)-[N-acetyl-beta-D-glucosaminyl-(1-&gt;6)]-N-acetyl-alpha-D-galactosaminyl}-L-threonyl-[protein] + 3'-phosphoadenylyl sulfate = 3-O-{beta-D-galactosyl-(1-&gt;3)-[6-O-sulfo-N-acetyl-beta-D-glucosaminyl-(1-&gt;6)]-N-acetyl-alpha-D-galactosaminyl}-L-threonyl-[protein] + adenosine 3',5'-bisphosphate + H(+). The catalysed reaction is 3-O-{beta-D-galactosyl-(1-&gt;3)-[N-acetyl-beta-D-glucosaminyl-(1-&gt;6)]-N-acetyl-alpha-D-galactosaminyl}-L-seryl-[protein] + 3'-phosphoadenylyl sulfate = 3-O-{beta-D-galactosyl-(1-&gt;3)-[6-O-sulfo-N-acetyl-beta-D-glucosaminyl-(1-&gt;6)]-N-acetyl-alpha-D-galactosaminyl}-L-seryl-[protein] + adenosine 3',5'-bisphosphate + H(+). The protein operates within protein modification; carbohydrate sulfation. In terms of biological role, sulfotransferase that utilizes 3'-phospho-5'-adenylyl sulfate (PAPS) as sulfonate donor to catalyze the transfer of sulfate to position 6 of non-reducing N-acetylglucosamine (GlcNAc) residues within keratan-like structures on N-linked glycans and within mucin-associated glycans that can ultimately serve as SELL ligands. SELL ligands are present in high endothelial cells (HEVs) and play a central role in lymphocyte homing at sites of inflammation. Participates in biosynthesis of the SELL ligand sialyl 6-sulfo Lewis X and in lymphocyte homing to Peyer patches. Has no activity toward O-linked sugars. Its substrate specificity may be influenced by its subcellular location. Sulfates GlcNAc residues at terminal, non-reducing ends of oligosaccharide chains. In Mus musculus (Mouse), this protein is Carbohydrate sulfotransferase 2 (Chst2).